A 310-amino-acid polypeptide reads, in one-letter code: Protein-L-isoaspartate O-methyltransferase (310 aa).

2 disordered regions span residues 1 to 42 (MSGE…AADK) and 64 to 90 (SAAA…APSV). The segment covering 14-32 (EDLKRAPRKSEGRAGERHA) has biased composition (basic and acidic residues). The segment covering 64 to 81 (SAAAKPATAPKPTALKPA) has biased composition (low complexity). The active site involves Ser-157.

The protein belongs to the methyltransferase superfamily. L-isoaspartyl/D-aspartyl protein methyltransferase family.

It is found in the cytoplasm. It catalyses the reaction [protein]-L-isoaspartate + S-adenosyl-L-methionine = [protein]-L-isoaspartate alpha-methyl ester + S-adenosyl-L-homocysteine. In terms of biological role, catalyzes the methyl esterification of L-isoaspartyl residues in peptides and proteins that result from spontaneous decomposition of normal L-aspartyl and L-asparaginyl residues. It plays a role in the repair and/or degradation of damaged proteins. This Burkholderia lata (strain ATCC 17760 / DSM 23089 / LMG 22485 / NCIMB 9086 / R18194 / 383) protein is Protein-L-isoaspartate O-methyltransferase.